The sequence spans 156 residues: 6,7-dimethyl-8-ribityllumazine synthase (156 aa).

Residues Phe23, 57 to 59 (AYE), and 81 to 83 (AII) contribute to the 5-amino-6-(D-ribitylamino)uracil site. 86–87 (GT) is a (2S)-2-hydroxy-3-oxobutyl phosphate binding site. The Proton donor role is filled by His89. Phe114 contributes to the 5-amino-6-(D-ribitylamino)uracil binding site. Position 128 (Arg128) interacts with (2S)-2-hydroxy-3-oxobutyl phosphate.

The protein belongs to the DMRL synthase family.

The enzyme catalyses (2S)-2-hydroxy-3-oxobutyl phosphate + 5-amino-6-(D-ribitylamino)uracil = 6,7-dimethyl-8-(1-D-ribityl)lumazine + phosphate + 2 H2O + H(+). It participates in cofactor biosynthesis; riboflavin biosynthesis; riboflavin from 2-hydroxy-3-oxobutyl phosphate and 5-amino-6-(D-ribitylamino)uracil: step 1/2. Catalyzes the formation of 6,7-dimethyl-8-ribityllumazine by condensation of 5-amino-6-(D-ribitylamino)uracil with 3,4-dihydroxy-2-butanone 4-phosphate. This is the penultimate step in the biosynthesis of riboflavin. The polypeptide is 6,7-dimethyl-8-ribityllumazine synthase (Helicobacter pylori (strain P12)).